Here is a 284-residue protein sequence, read N- to C-terminus: Diaminopimelate epimerase (284 aa).

Residues N20, Q53, and N73 each coordinate substrate. The active-site Proton donor is the C82. Residues 83 to 84 (GN), N167, N200, and 218 to 219 (ER) each bind substrate. C227 functions as the Proton acceptor in the catalytic mechanism. 228–229 (GS) contacts substrate.

Belongs to the diaminopimelate epimerase family. Homodimer.

It is found in the cytoplasm. It carries out the reaction (2S,6S)-2,6-diaminopimelate = meso-2,6-diaminopimelate. The protein operates within amino-acid biosynthesis; L-lysine biosynthesis via DAP pathway; DL-2,6-diaminopimelate from LL-2,6-diaminopimelate: step 1/1. Its function is as follows. Catalyzes the stereoinversion of LL-2,6-diaminopimelate (L,L-DAP) to meso-diaminopimelate (meso-DAP), a precursor of L-lysine and an essential component of the bacterial peptidoglycan. The polypeptide is Diaminopimelate epimerase (Xylella fastidiosa (strain M23)).